A 101-amino-acid chain; its full sequence is uncharacterized protein (101 aa).

Residues 13–33 form a helical membrane-spanning segment; sequence FISIMCLFSIPLCFSLSIFFF.

The protein localises to the membrane. This is an uncharacterized protein from Schizosaccharomyces pombe (strain 972 / ATCC 24843) (Fission yeast).